We begin with the raw amino-acid sequence, 103 residues long: uncharacterized protein (103 aa).

The next 3 helical transmembrane spans lie at 1 to 21 (MPGV…VFLS), 29 to 49 (IAFI…TGYF), and 69 to 89 (VVEW…GLLF).

It localises to the cell membrane. This is an uncharacterized protein from Methanocaldococcus jannaschii (strain ATCC 43067 / DSM 2661 / JAL-1 / JCM 10045 / NBRC 100440) (Methanococcus jannaschii).